A 152-amino-acid polypeptide reads, in one-letter code: UPF0266 membrane protein YobD (152 aa).

3 helical membrane-spanning segments follow: residues 6 to 26 (LVLI…QFIM), 45 to 65 (VDSV…VTSH), and 67 to 87 (AQMT…IFWI).

This sequence belongs to the UPF0266 family.

The protein localises to the cell inner membrane. The polypeptide is UPF0266 membrane protein YobD (Salmonella paratyphi B (strain ATCC BAA-1250 / SPB7)).